The sequence spans 1084 residues: MDIPIIKLLVEKDSISKKYYCPDCGELLINNFNPEKFKALQCKNGHTKCLQCWEQHLKLRKNCLQCKVPVSSIKDLSLNLYIAQKISANKVYCKNRYYETKNFTIDEENGCKEIIRVDEYEKHIKECPLTYTDCKNYDDFIRANPQIDEKLLKRCGKINKSLLDEHDEQCLYQTITCEHCNELINRIDHEIHLSEWCSDIPIKCEDCKHVFKKKYIQEHKESNCPESVIDCVYVAGGCQKKLKRYNMSKHLVTANHHSQYMSKIIEEQNQDIKELHNFIENHLSKKFIDLDTIVNIQKYLIKNKNQKISQLTEIIKRVDNSFIGLHEFDELEDYISNTIDIISNFDNYKNSNSNNNNNNKNTNENENTNENTNENENIDIVGNSDNENNINENKAENNINSFIKEQIELIKIKSQQFDINSVIEEIRKNYNVEPYQVNGDNAMITSPNKTDVDNLVFDDDEDDFDLEEPQIVGEFIFNKSQETIAIPTLIRQQQQQQQQQQQQQQQQQQQPPPTPLPPQNTTITNDIQMENINENINNNINENNNNNNKNNDDDNITAATATNNSNTTSTHTILNGTNNEASMTDINETTSTTTTAETTEATASESTEESNNTAETTTTTTTTTTTITTAAETVNSTETITLRTSEKVEEKGKDGLETTESFSILNSTENSTISSLKVLSNSMIEPEITTDKENETNIKESIETKIIESIVESSSPTKSLLKQGKEQEQKNQNGNGNENENENENENENENENENENENANANVNEKENEKENSNINTSNDTEPTNDILEDIKKNKENEDSNESEDNKNNNIKSVEDTNNNNNNNNNNNNNNNNNNNNNNNNNNNNNNNENVYDIKKDRNRENVEDSNDNNSKNENGKINDNGDVKMGSEDKVNDDDDKMAMVDRSNTIFRNQILFKDFTKLNARHGVGVSIKHNHTIGKYKFYSELFINGETENEKDYLSFYLNKCKKENESIIISFGIELLNVDPKKSIRVYWDNELLNNSSQVMYNYGYGETTVIKKSILEDPNNGFLVDNCFIVNLEVYKIIDVPHPPPAHLLQKSSPPAATTTTTTSSSSSKTTPKTKR.

The 85-residue stretch at 19-103 (YYCPDCGELL…KNRYYETKNF (85 aa)) folds into the LIM zinc-binding domain. TRAF-type zinc fingers lie at residues 122–190 (KHIK…IDHE) and 191–248 (IHLS…YNMS). A coiled-coil region spans residues 265–321 (IEEQNQDIKELHNFIENHLSKKFIDLDTIVNIQKYLIKNKNQKISQLTEIIKRVDNS). Disordered stretches follow at residues 348–392 (YKNS…NINE), 490–523 (IRQQ…NTTI), 537–656 (NNNI…KDGL), and 709–897 (SIVE…NDDD). Low complexity-rich tracts occupy residues 349–375 (KNSN…TNEN), 492–509 (QQQQ…QQQQ), 537–549 (NNNI…NNNK), and 556–570 (ITAA…TTST). Residues 489 to 553 (LIRQQQQQQQ…NNNNNKNNDD (65 aa)) adopt a coiled-coil conformation. Positions 571-586 (HTILNGTNNEASMTDI) are enriched in polar residues. Positions 587–637 (NETTSTTTTAETTEATASESTEESNNTAETTTTTTTTTTTITTAAETVNST) are enriched in low complexity. Residues 644-656 (TSEKVEEKGKDGL) show a composition bias toward basic and acidic residues. The stretch at 735-852 (NGNENENENE…NNNNNNNENV (118 aa)) forms a coiled coil. Positions 739 to 757 (NENENENENENENENENEN) are enriched in acidic residues. Positions 774–785 (SNINTSNDTEPT) are enriched in polar residues. Residues 790–799 (EDIKKNKENE) are compositionally biased toward basic and acidic residues. Low complexity predominate over residues 809–849 (NNNIKSVEDTNNNNNNNNNNNNNNNNNNNNNNNNNNNNNNN). Basic and acidic residues-rich tracts occupy residues 853 to 864 (YDIKKDRNRENV) and 875 to 892 (ENGK…SEDK). Residues 909–1042 (IFRNQILFKD…DNCFIVNLEV (134 aa)) enclose the MATH domain. The interval 1056-1084 (LLQKSSPPAATTTTTTSSSSSKTTPKTKR) is disordered. The span at 1059–1084 (KSSPPAATTTTTTSSSSSKTTPKTKR) shows a compositional bias: low complexity.

It belongs to the TNF receptor-associated factor family.

The protein localises to the cytoplasm. In terms of biological role, probable adapter protein and signal transducer that links members of the tumor necrosis factor receptor family to different signaling pathways by association with the receptor cytoplasmic domain and kinases. The chain is TNF receptor-associated factor family protein DDB_G0272098 from Dictyostelium discoideum (Social amoeba).